We begin with the raw amino-acid sequence, 447 residues long: Na(+)-translocating NADH-quinone reductase subunit A (447 aa).

The protein belongs to the NqrA family. Composed of six subunits; NqrA, NqrB, NqrC, NqrD, NqrE and NqrF.

The enzyme catalyses a ubiquinone + n Na(+)(in) + NADH + H(+) = a ubiquinol + n Na(+)(out) + NAD(+). NQR complex catalyzes the reduction of ubiquinone-1 to ubiquinol by two successive reactions, coupled with the transport of Na(+) ions from the cytoplasm to the periplasm. NqrA to NqrE are probably involved in the second step, the conversion of ubisemiquinone to ubiquinol. The polypeptide is Na(+)-translocating NADH-quinone reductase subunit A (Cellvibrio japonicus (strain Ueda107) (Pseudomonas fluorescens subsp. cellulosa)).